A 127-amino-acid chain; its full sequence is uncharacterized protein (127 aa).

A helical transmembrane segment spans residues 85 to 107 (VYLGKIGFVLLHVFYLSCIAYYD).

It is found in the mitochondrion membrane. This is an uncharacterized protein from Dictyostelium discoideum (Social amoeba).